We begin with the raw amino-acid sequence, 83 residues long: Small ribosomal subunit protein uS17 (83 aa).

Belongs to the universal ribosomal protein uS17 family. As to quaternary structure, part of the 30S ribosomal subunit.

Functionally, one of the primary rRNA binding proteins, it binds specifically to the 5'-end of 16S ribosomal RNA. In Campylobacter concisus (strain 13826), this protein is Small ribosomal subunit protein uS17.